Consider the following 396-residue polypeptide: Gap junction gamma-1 protein (396 aa).

Over 1–22 the chain is Cytoplasmic; it reads MSWSFLTRLLEEIHNHSTFVGK. Residues 23 to 45 form a helical membrane-spanning segment; it reads IWLTVLIVFRIVLTAVGGESIYY. Residues 46-75 lie on the Extracellular side of the membrane; it reads DEQSKFVCNTEQPGCENVCYDAFAPLSHVR. A helical transmembrane segment spans residues 76 to 95; it reads FWVFQIILVATPSVMYLGYA. Topologically, residues 96–175 are cytoplasmic; the sequence is IHKIAKMEHG…RRIREDGLMK (80 aa). Residues 146–165 form a disordered region; sequence LESEKENKDQNQSKPKHDGR. Basic and acidic residues predominate over residues 147–156; it reads ESEKENKDQN. A helical transmembrane segment spans residues 176-198; sequence IYVLQLLARTVFEVGFLVGQYFL. The Extracellular segment spans residues 199–228; that stretch reads YGFQVHPFYVCSRLPCPHKIDCFISRPTEK. The chain crosses the membrane as a helical span at residues 229–248; that stretch reads TIFLLIMYGVTGLCLLLNIW. At 249 to 396 the chain is on the cytoplasmic side; sequence EMLHLGFGTI…SGDGKTSVWI (148 aa). Positions 356-396 are disordered; that stretch reads YNHQNNPHGSREKKAKVGSKAGSNKSSASSKSGDGKTSVWI. Residues 373-396 show a composition bias toward low complexity; sequence GSKAGSNKSSASSKSGDGKTSVWI.

This sequence belongs to the connexin family. Gamma-type subfamily. A connexon is composed of a hexamer of connexins. Interacts with CNST.

The protein resides in the cell membrane. The protein localises to the cell junction. Its subcellular location is the gap junction. One gap junction consists of a cluster of closely packed pairs of transmembrane channels, the connexons, through which materials of low MW diffuse from one cell to a neighboring cell. The chain is Gap junction gamma-1 protein (GJC1) from Bos taurus (Bovine).